We begin with the raw amino-acid sequence, 214 residues long: ATP synthase subunit 5, mitochondrial (214 aa).

The N-terminal 24 residues, 1–24 (MFASRAIRMMSMRPMARTMATKAA), are a transit peptide targeting the mitochondrion.

F-type ATP synthases have 2 components, the catalytic core F(1) and the membrane-embedded component F(0), linked together by a central stalk and a peripheral stalk. The central stalk, also called rotor shaft, is often seen as part of F(1). The peripheral stalk is seen as part of F(0). F(0) contains the membrane channel next to the rotor. F-type ATP synthases form dimers but each monomer functions independently in ATP generation. The dimer consists of 17 different polypeptides: ATP1 (subunit alpha, 3 molecules per monomer, part of F(1)), ATP2 (subunit beta, 3 copies per monomer, part of F(1)), ATP3 (subunit gamma, part of the central stalk), ATP4 (subunit b, part of the peripheral stalk), ATP5/OSCP (subunit 5/OSCP, part of the peripheral stalk), ATP6 (subunit a, part of the peripheral stalk), ATP7 (subunit d, part of the peripheral stalk), ATP8 (subunit 8, part of the peripheral stalk), OLI1 (subunit c, part of the rotor, 10 molecules per monomer), ATP14 (subunit h, part of the peripheral stalk), ATP15 (subunit epsilon, part of the central stalk), ATP16 (subunit delta, part of the central stalk), ATP17 (subunit f, part of the peripheral stalk), ATP18 (subunit i/j, part of the peripheral stalk), ATP19 (subunit k, dimer-specific, at interface between monomers), ATP20 (subunit g, at interface between monomers), TIM11 (subunit e, at interface between monomers).

It is found in the mitochondrion inner membrane. Its function is as follows. Mitochondrial membrane ATP synthase (F(1)F(0) ATP synthase or Complex V) produces ATP from ADP in the presence of a proton gradient across the membrane which is generated by electron transport complexes of the respiratory chain. F-type ATP synthases consist of two structural domains, F(1) - containing the extramembraneous catalytic core, and F(0) - containing the membrane proton channel, linked together by a central stalk and a peripheral stalk. During catalysis, ATP synthesis in the catalytic domain of F(1) is coupled via a rotary mechanism of the central stalk subunits to proton translocation. Part of the complex F(0) domain and the peripheral stalk, which acts as a stator to hold the catalytic alpha/ATP1(3)beta/ATP2(3) subcomplex and subunit a/ATP6 static relative to the rotary elements. This Yarrowia lipolytica (strain CLIB 122 / E 150) (Yeast) protein is ATP synthase subunit 5, mitochondrial.